The primary structure comprises 684 residues: MSAQDFLVELGTEELPPKTLVSLADAFLAGIEKGLAGAGLTYSAKQVYAAPRRLAVLITALATQQPDRSVNLDGPPRQAAFDADGNPTQAALGFAKKCGVDLSEIDQSGPKLRYSQTILGKPTTSLLPTIVEDSLNDLPIAKRMRWGARKEEFVRPTQWLVMLFGDQVVDCTILAQSAGRHSRGHRFHHPQDVRISSPAGYLSDLRAAHVLADFNERRQIISKRVDELATQQEGTAIVPPSLLDEVAGLVEWPVPLVCSFEERFLEVPQEALITTMQDNQKYFCLLDVDGKLLPRFITVANIESKDPAQIIAGNEKVVRPRLTDAEFFFKQDKKQKLETFNDRLKNVVFQAQLGSVFDKAERVSKLAAYIAPRIGGDAQRAARAGLLSKCDLSSEMVGEFPEMQGIAGYYYAKADGEPEDVALALNEQYMPRGAGAELPTTLTGAAVAIADKLDTLVGIFGIGMLPTGSKDPYALRRAALGILRILIEKKLDLNLVETVKFAVAQFGAKIKPAGLAEQVLDFIFDRLRARYEDEGVDVAVYLSVRALQPASALDFDQRVQAVQAFRKLPQAAALAAVNKRVSNLLSKAEGSIAQTVEPKYFDNANEFSLYSAIQQADHAIQPMAAERQYSESLARLAMLREPVDAFFEAVMVNAEDANVRANRYALLSRLRGLFLGVADISLLG.

Belongs to the class-II aminoacyl-tRNA synthetase family. In terms of assembly, tetramer of two alpha and two beta subunits.

Its subcellular location is the cytoplasm. It catalyses the reaction tRNA(Gly) + glycine + ATP = glycyl-tRNA(Gly) + AMP + diphosphate. The polypeptide is Glycine--tRNA ligase beta subunit (Pseudomonas syringae pv. syringae (strain B728a)).